Reading from the N-terminus, the 518-residue chain is Nuclear receptor ROR-gamma (518 aa).

Positions 1–30 (MDRAPQRQHRASRELLAAKKTHTSQIEVIP) are modulating. 2 NR C4-type zinc fingers span residues 31–51 (CKIC…CEGC) and 67–91 (CTRQ…LQKC). Positions 31–96 (CKICGDKSSG…RLQKCLALGM (66 aa)) form a DNA-binding region, nuclear receptor. Disordered regions lie at residues 105 to 183 (RMSK…SGSG) and 238 to 258 (HPGL…SFRS). A compositionally biased stretch (basic and acidic residues) spans 109 to 118 (KQRDSLHAEV). Low complexity predominate over residues 119 to 130 (QKQLQQRQQQQQ). The NR LBD domain maps to 269–508 (EIEHLVQSVC…PPLYKELFST (240 aa)). An AF-2 motif is present at residues 501 to 506 (LYKELF).

It belongs to the nuclear hormone receptor family. NR1 subfamily. Interacts (via AF-2 motif) with the coactivator NCOA2 (via LXXLL motif). Interacts with the corepressor NCOR1. Interacts with CRY1. Interacts (via AF-2 motif) with the coactivators NCOA1 and PPARGC1A (via LXXLL motif). Interacts (via AF-2 motif) with PROX1. Interacts with FOXP3. Interacts with NR0B2. Isoform 1 is widely expressed in many tissues, including liver and adipose, and highly expressed in skeletal muscle. Isoform 2 is primarily expressed in immature thymocytes.

It localises to the nucleus. Functionally, nuclear receptor that binds DNA as a monomer to ROR response elements (RORE) containing a single core motif half-site 5'-AGGTCA-3' preceded by a short A-T-rich sequence. Key regulator of cellular differentiation, immunity, peripheral circadian rhythm as well as lipid, steroid, xenobiotics and glucose metabolism. Considered to have intrinsic transcriptional activity, have some natural ligands like oxysterols that act as agonists (25-hydroxycholesterol) or inverse agonists (7-oxygenated sterols), enhancing or repressing the transcriptional activity, respectively. Recruits distinct combinations of cofactors to target gene regulatory regions to modulate their transcriptional expression, depending on the tissue, time and promoter contexts. Regulates the circadian expression of clock genes such as CRY1, BMAL1 and NR1D1 in peripheral tissues and in a tissue-selective manner. Competes with NR1D1 for binding to their shared DNA response element on some clock genes such as BMAL1, CRY1 and NR1D1 itself, resulting in NR1D1-mediated repression or RORC-mediated activation of the expression, leading to the circadian pattern of clock genes expression. Therefore influences the period length and stability of the clock. Involved in the regulation of the rhythmic expression of genes involved in glucose and lipid metabolism, including PLIN2 and AVPR1A. Negative regulator of adipocyte differentiation through the regulation of early phase genes expression, such as MMP3. Controls adipogenesis as well as adipocyte size and modulates insulin sensitivity in obesity. In liver, has specific and redundant functions with RORA as positive or negative modulator of expression of genes encoding phase I and Phase II proteins involved in the metabolism of lipids, steroids and xenobiotics, such as SULT1E1. Also plays a role in the regulation of hepatocyte glucose metabolism through the regulation of G6PC1 and PCK1. Regulates the rhythmic expression of PROX1 and promotes its nuclear localization. Plays an indispensable role in the induction of IFN-gamma dependent anti-mycobacterial systemic immunity. Essential for thymopoiesis and the development of several secondary lymphoid tissues, including lymph nodes and Peyer's patches. Required for the generation of LTi (lymphoid tissue inducer) cells. Regulates thymocyte survival through DNA-binding on ROREs of target gene promoter regions and recruitment of coactivaros via the AF-2. Also plays a key role, downstream of IL6 and TGFB and synergistically with RORA, for lineage specification of uncommitted CD4(+) T-helper (T(H)) cells into T(H)17 cells, antagonizing the T(H)1 program. Probably regulates IL17 and IL17F expression on T(H) by binding to the essential enhancer conserved non-coding sequence 2 (CNS2) in the IL17-IL17F locus. May also play a role in the pre-TCR activation cascade leading to the maturation of alpha/beta T-cells and may participate in the regulation of DNA accessibility in the TCR-J(alpha) locus. The chain is Nuclear receptor ROR-gamma (RORC) from Homo sapiens (Human).